The primary structure comprises 293 residues: Phosphoribosylaminoimidazole-succinocarboxamide synthase (293 aa).

The protein belongs to the SAICAR synthetase family.

It catalyses the reaction 5-amino-1-(5-phospho-D-ribosyl)imidazole-4-carboxylate + L-aspartate + ATP = (2S)-2-[5-amino-1-(5-phospho-beta-D-ribosyl)imidazole-4-carboxamido]succinate + ADP + phosphate + 2 H(+). It functions in the pathway purine metabolism; IMP biosynthesis via de novo pathway; 5-amino-1-(5-phospho-D-ribosyl)imidazole-4-carboxamide from 5-amino-1-(5-phospho-D-ribosyl)imidazole-4-carboxylate: step 1/2. The chain is Phosphoribosylaminoimidazole-succinocarboxamide synthase from Bordetella parapertussis (strain 12822 / ATCC BAA-587 / NCTC 13253).